The sequence spans 968 residues: MSSAAKNFYQVVKSAPKGRFKGIKRDYTVEDVLKLRGSIDIDYTLATRGANKLWQLLHTEPFVPALGAQTGNQAVQMVRAGLKAIYLSGWQVAADANSAGDMYPDQSLYPANSGPELAKRINRSLRRADQIEACEAEDYLAQRDWYAPIVADAEAGFGGALNCFELMKAYIEAGAAGVHYEDQLGSEKKCGHMGGKVLIPTAQHIRHLNASRLAADVCGVPTIIVARTDAESSRLLTSDIDPRDHPYIDYEAGRTIEGFYRLKDSTAIQYCIDRAIQYAPYTDLIWMETSHPTIADAREFAEGVHKQYPDKMFAYNCSPSFNWKKHLSPSQMEKFQKELGAMGFKYQFITLAGYHANSYSMFDLARNYKEKGMLAYSGLQEGEFAAEKHGYTAVKHQREVGTGYFDAVSRAVTGGLSSTTALSGSTEEAQFQTAVASQDEEILSLTAQNVAGDEKILTPDALRFLHDLNTEFNPRRLRLLSKRNQVQADINNSLWFPDFNKETEVLRSDQGWKGAEIPRDLQDRRVEITGPTDRKMVINAMNSGANVFMADFEDSNSPTWRNQLEGQINLYDAVRNNISYTHPTTKKEYTLNEKHAVLKVRPRGWHLPEKHVLIHNQPTSGSLFDFGLFVFHNAKALIAQGSGPYFYLPKLQSAEEAQLWADVFKYTEDKLGLARGTIKCTVLIEHLLASFQLHEIIHALKDNIVGLNCGRWDYIFSYIKTFQNHRKFLLPDRFQIGMTAPFMRNYSLEVIKACHLRGIHAMGGMAAQIPIKHDQVANDKAFALVRADKEREATDGHDGTWVAHPGLVPLAKRVFDQMMPKPNQISKNLTRANCTKEDLTVIPEGTRTEAGFRHNISVTLGYLDSWLRGTGCVPLYNLMEDAATAEISRAQLWQWLHHDAKLEDGRTIDAGLVKQTIAAETERRLIRAGSVVNRIPEAADLLEKFVTEEKMSDFLTTDAYDRLVSEGY.

The isocitrate lyase stretch occupies residues 1–443; that stretch reads MSSAAKNFYQ…AVASQDEEIL (443 aa). The tract at residues 444-968 is malate synthase; that stretch reads SLTAQNVAGD…AYDRLVSEGY (525 aa). Arg-601 serves as the catalytic Proton acceptor. The active-site Proton donor is the Asp-881.

It in the N-terminal section; belongs to the isocitrate lyase/PEP mutase superfamily. Isocitrate lyase family. The protein in the C-terminal section; belongs to the malate synthase family. In terms of tissue distribution, intestinal and body wall muscle cells.

The catalysed reaction is D-threo-isocitrate = glyoxylate + succinate. It carries out the reaction glyoxylate + acetyl-CoA + H2O = (S)-malate + CoA + H(+). It functions in the pathway carbohydrate metabolism; glyoxylate cycle; (S)-malate from isocitrate: step 1/2. The protein operates within carbohydrate metabolism; glyoxylate cycle; (S)-malate from isocitrate: step 2/2. This Caenorhabditis elegans protein is Bifunctional glyoxylate cycle protein (icl-1).